The following is a 747-amino-acid chain: Ion-translocating oxidoreductase complex subunit C (747 aa).

2 4Fe-4S ferredoxin-type domains span residues 368 to 397 (MEPV…QQLY) and 407 to 436 (KARN…VQYY). Residues cysteine 377, cysteine 380, cysteine 383, cysteine 387, cysteine 416, cysteine 419, cysteine 422, and cysteine 426 each contribute to the [4Fe-4S] cluster site. The interval 538–564 (VREERARENQTQQETPTVDVPSTELDD) is disordered.

Belongs to the 4Fe4S bacterial-type ferredoxin family. RnfC subfamily. As to quaternary structure, the complex is composed of six subunits: RnfA, RnfB, RnfC, RnfD, RnfE and RnfG. The cofactor is [4Fe-4S] cluster.

The protein localises to the cell inner membrane. Part of a membrane-bound complex that couples electron transfer with translocation of ions across the membrane. This Pectobacterium carotovorum subsp. carotovorum (strain PC1) protein is Ion-translocating oxidoreductase complex subunit C.